A 306-amino-acid polypeptide reads, in one-letter code: Pantothenate kinase (306 aa).

91 to 98 (GSVAVGKS) contacts ATP.

It belongs to the prokaryotic pantothenate kinase family.

The protein resides in the cytoplasm. The catalysed reaction is (R)-pantothenate + ATP = (R)-4'-phosphopantothenate + ADP + H(+). The protein operates within cofactor biosynthesis; coenzyme A biosynthesis; CoA from (R)-pantothenate: step 1/5. The sequence is that of Pantothenate kinase from Streptococcus agalactiae serotype Ia (strain ATCC 27591 / A909 / CDC SS700).